The chain runs to 79 residues: Sec-independent protein translocase protein TatA (79 aa).

The chain crosses the membrane as a helical span at residues 1-21; that stretch reads MGGISIWQLLIIALIVILLFG. Residues 42–79 are disordered; the sequence is AMTSETSEEEKKALEDSQTAQTSQQAEKKPESKDKEQA. Residues 57 to 66 show a composition bias toward polar residues; the sequence is DSQTAQTSQQ. Residues 67 to 79 show a composition bias toward basic and acidic residues; the sequence is AEKKPESKDKEQA.

This sequence belongs to the TatA/E family. In terms of assembly, the Tat system comprises two distinct complexes: a TatABC complex, containing multiple copies of TatA, TatB and TatC subunits, and a separate TatA complex, containing only TatA subunits. Substrates initially bind to the TatABC complex, which probably triggers association of the separate TatA complex to form the active translocon.

The protein localises to the cell inner membrane. Functionally, part of the twin-arginine translocation (Tat) system that transports large folded proteins containing a characteristic twin-arginine motif in their signal peptide across membranes. TatA could form the protein-conducting channel of the Tat system. The sequence is that of Sec-independent protein translocase protein TatA from Shewanella denitrificans (strain OS217 / ATCC BAA-1090 / DSM 15013).